Reading from the N-terminus, the 88-residue chain is Phosphocarrier protein HPr (88 aa).

The HPr domain occupies 1 to 88 (MASKEFHIVA…ETMTKEGLAE (88 aa)). The active-site Pros-phosphohistidine intermediate is the His-15. Phosphoserine; by HPrK/P is present on Ser-46.

This sequence belongs to the HPr family.

The protein resides in the cytoplasm. With respect to regulation, phosphorylation on Ser-46 inhibits the phosphoryl transfer from enzyme I to HPr. Functionally, general (non sugar-specific) component of the phosphoenolpyruvate-dependent sugar phosphotransferase system (sugar PTS). This major carbohydrate active-transport system catalyzes the phosphorylation of incoming sugar substrates concomitantly with their translocation across the cell membrane. The phosphoryl group from phosphoenolpyruvate (PEP) is transferred to the phosphoryl carrier protein HPr by enzyme I. Phospho-HPr then transfers it to the PTS EIIA domain. In terms of biological role, P-Ser-HPr interacts with the catabolite control protein A (CcpA), forming a complex that binds to DNA at the catabolite response elements cre, operator sites preceding a large number of catabolite-regulated genes. Thus, P-Ser-HPr is a corepressor in carbon catabolite repression (CCR), a mechanism that allows bacteria to coordinate and optimize the utilization of available carbon sources. P-Ser-HPr also plays a role in inducer exclusion, in which it probably interacts with several non-PTS permeases and inhibits their transport activity. This Lactococcus lactis subsp. cremoris (Streptococcus cremoris) protein is Phosphocarrier protein HPr (ptsH).